Reading from the N-terminus, the 209-residue chain is uncharacterized protein (209 aa).

Over residues 1–15 the composition is skewed to basic and acidic residues; the sequence is MHRIDTKTAQKDKFG. Residues 1–34 form a disordered region; the sequence is MHRIDTKTAQKDKFGAGKNGFTRGNPQTGTPATD. A compositionally biased stretch (polar residues) spans 22 to 31; sequence TRGNPQTGTP.

This sequence to E.coli YfdL and M.jannaschii MJ0347.

This is an uncharacterized protein from Escherichia coli (strain K12).